Here is a 194-residue protein sequence, read N- to C-terminus: Outer-membrane lipoprotein LolB (194 aa).

A signal peptide spans 1 to 18; it reads MTLLLRLFTLGCLLLLAG. Cys-19 carries N-palmitoyl cysteine lipidation. Cys-19 carries the S-diacylglycerol cysteine lipid modification.

This sequence belongs to the LolB family. As to quaternary structure, monomer.

It localises to the cell outer membrane. Plays a critical role in the incorporation of lipoproteins in the outer membrane after they are released by the LolA protein. In Aeromonas hydrophila subsp. hydrophila (strain ATCC 7966 / DSM 30187 / BCRC 13018 / CCUG 14551 / JCM 1027 / KCTC 2358 / NCIMB 9240 / NCTC 8049), this protein is Outer-membrane lipoprotein LolB.